The following is a 1363-amino-acid chain: Homeobox protein 13 (1363 aa).

Residues 15–73 (FVMEQIQQQQQQQQQQQQQQQQQQQQQQQQQQQQLQQQQQQQQQQQQQQQQQQQQQQQN) adopt a coiled-coil conformation. Disordered regions lie at residues 66 to 96 (QQQQQQQNPKMNNQPNETRLPSPPLLNSTVP), 120 to 177 (SQHA…INGS), 308 to 437 (INGT…YHGG), 621 to 731 (LNSP…QHQQ), 765 to 818 (HHHH…PQHS), 857 to 911 (SINS…SNSI), 1001 to 1137 (QNYN…TLIN), 1166 to 1202 (NFINNNSNNNNNMEIDDDDEDGIDGIEGEDDSKKRMR), and 1270 to 1341 (ISFG…TLIS). Polar residues predominate over residues 73 to 96 (NPKMNNQPNETRLPSPPLLNSTVP). Residues 132–147 (SLNSSNNNNNNNFNNS) are compositionally biased toward low complexity. The segment covering 148-158 (RPTFSSCSGNS) has biased composition (polar residues). Composition is skewed to low complexity over residues 159-177 (NNTTTTTTTTTTTNPINGS) and 315-326 (SNHSNNNNNNNN). Basic residues predominate over residues 327–339 (NHHHHHHHHHQKR). Positions 348-378 (TNHLTPLPLLHKHTNNNNNINNNNNHNHNNI) are enriched in low complexity. Polar residues predominate over residues 379–393 (LGSPNQLNRSQDFTS). 5 stretches are compositionally biased toward low complexity: residues 394 to 408 (KNNNINNNNNNNNKI), 415 to 426 (NKGSPNQNSSEN), 641 to 693 (NNNS…NNNI), 709 to 731 (HHQQQLQHQQHQQQQLLHQQHQQ), and 770 to 793 (QQQQQQQQQQQHNNNNNNNNSNHN). Residues 738 to 789 (QQQLQIQYQQQQTHNNNLNQTQQLYYNHHHHQQQQQQQQQQQQHNNNNNNNN) adopt a coiled-coil conformation. Polar residues-rich tracts occupy residues 794-818 (SVLTSPPLSQFPKTPLQLSQTPQHS) and 857-883 (SINSNSGMSLPMISSPSPNLSHMQKNR). 3 stretches are compositionally biased toward low complexity: residues 889–911 (ILNSSLSSSNTTNSATTSSSNSI), 1001–1031 (QNYNENNNNNNNNNNNNYNINNINNNNNNNF), and 1045–1063 (NINNNNNNNNNNNNNNNNN). Residues 1064-1078 (KNDKNESEFESKEKL) show a composition bias toward basic and acidic residues. A compositionally biased stretch (polar residues) spans 1081–1095 (PFGSSIPNIVNNEQL). Low complexity-rich tracts occupy residues 1096–1116 (SPYSQQSLSSSSSENPSPQWS), 1123–1137 (TSSSKLSNSTSTLIN), and 1166–1177 (NFINNNSNNNNN). Over residues 1179 to 1195 (EIDDDDEDGIDGIEGED) the composition is skewed to acidic residues. The segment at residues 1198–1261 (KKRMRKTTRP…NRRTKDKLKN (64 aa)) is a DNA-binding region (homeobox). A compositionally biased stretch (low complexity) spans 1275 to 1294 (SSTSSTQTSTNSPSSQLSPL). Residues 1297–1316 (NMNNNDQQSISTPSLILSQI) show a composition bias toward polar residues. Residues 1317–1334 (NNNQNNNQNNNNNNNTNN) show a composition bias toward low complexity.

It is found in the nucleus. In terms of biological role, putative transcription factor. This is Homeobox protein 13 (hbx13) from Dictyostelium discoideum (Social amoeba).